The following is a 331-amino-acid chain: UPF0194 membrane protein YbhG (331 aa).

The signal sequence occupies residues 1 to 19; sequence MKKPVVIGLAIAAIVAVIA. Positions 107-208 form a coiled coil; that stretch reads EEIAQAAAAV…LDLQDTTLIA (102 aa).

The protein belongs to the UPF0194 family.

It is found in the periplasm. The protein is UPF0194 membrane protein YbhG of Salmonella gallinarum (strain 287/91 / NCTC 13346).